Here is a 197-residue protein sequence, read N- to C-terminus: Probable nicotinate-nucleotide adenylyltransferase (197 aa).

Belongs to the NadD family.

It carries out the reaction nicotinate beta-D-ribonucleotide + ATP + H(+) = deamido-NAD(+) + diphosphate. Its pathway is cofactor biosynthesis; NAD(+) biosynthesis; deamido-NAD(+) from nicotinate D-ribonucleotide: step 1/1. Catalyzes the reversible adenylation of nicotinate mononucleotide (NaMN) to nicotinic acid adenine dinucleotide (NaAD). The polypeptide is Probable nicotinate-nucleotide adenylyltransferase (Borrelia garinii subsp. bavariensis (strain ATCC BAA-2496 / DSM 23469 / PBi) (Borreliella bavariensis)).